Here is a 430-residue protein sequence, read N- to C-terminus: Serine--tRNA ligase (430 aa).

236 to 238 contributes to the L-serine binding site; it reads TAE. 267 to 269 provides a ligand contact to ATP; the sequence is RSE. An L-serine-binding site is contributed by glutamate 290. Residue 354–357 participates in ATP binding; the sequence is EISS. Serine 390 serves as a coordination point for L-serine.

Belongs to the class-II aminoacyl-tRNA synthetase family. Type-1 seryl-tRNA synthetase subfamily. In terms of assembly, homodimer. The tRNA molecule binds across the dimer.

Its subcellular location is the cytoplasm. It catalyses the reaction tRNA(Ser) + L-serine + ATP = L-seryl-tRNA(Ser) + AMP + diphosphate + H(+). The enzyme catalyses tRNA(Sec) + L-serine + ATP = L-seryl-tRNA(Sec) + AMP + diphosphate + H(+). It functions in the pathway aminoacyl-tRNA biosynthesis; selenocysteinyl-tRNA(Sec) biosynthesis; L-seryl-tRNA(Sec) from L-serine and tRNA(Sec): step 1/1. Catalyzes the attachment of serine to tRNA(Ser). Is also able to aminoacylate tRNA(Sec) with serine, to form the misacylated tRNA L-seryl-tRNA(Sec), which will be further converted into selenocysteinyl-tRNA(Sec). The protein is Serine--tRNA ligase of Idiomarina loihiensis (strain ATCC BAA-735 / DSM 15497 / L2-TR).